Consider the following 352-residue polypeptide: Glycerol-1-phosphate dehydrogenase [NAD(P)+] (352 aa).

Residues 91 to 95 (GRVID) and 113 to 116 (TVAS) each bind NAD(+). Asp-118 lines the substrate pocket. An NAD(+)-binding site is contributed by Ser-122. Glu-169 lines the substrate pocket. 2 residues coordinate Zn(2+): Glu-169 and His-249. Position 253 (His-253) interacts with substrate. Residue His-269 coordinates Zn(2+).

It belongs to the glycerol-1-phosphate dehydrogenase family. As to quaternary structure, homodimer. It depends on Zn(2+) as a cofactor.

The protein resides in the cytoplasm. The enzyme catalyses sn-glycerol 1-phosphate + NAD(+) = dihydroxyacetone phosphate + NADH + H(+). It catalyses the reaction sn-glycerol 1-phosphate + NADP(+) = dihydroxyacetone phosphate + NADPH + H(+). The protein operates within membrane lipid metabolism; glycerophospholipid metabolism. Functionally, catalyzes the NAD(P)H-dependent reduction of dihydroxyacetonephosphate (DHAP or glycerone phosphate) to glycerol 1-phosphate (G1P). The G1P thus generated is used as the glycerophosphate backbone of phospholipids in the cellular membranes of Archaea. The chain is Glycerol-1-phosphate dehydrogenase [NAD(P)+] from Caldivirga maquilingensis (strain ATCC 700844 / DSM 13496 / JCM 10307 / IC-167).